A 187-amino-acid chain; its full sequence is Frequenin-1 (187 aa).

Gly-2 is lipidated: N-myristoyl glycine. EF-hand domains lie at 24–59 (EKEI…FPQG), 60–95 (DPSK…TSKG), 96–131 (NLDE…IYQM), and 143–178 (TPQK…DPRI). The Ca(2+) site is built by Asp-73, Asn-75, Asp-77, Ser-79, Glu-84, Asp-109, Asp-111, Asp-113, Tyr-115, Glu-120, Asp-156, Asn-158, Asp-160, Lys-162, and Glu-167.

It belongs to the recoverin family. As to quaternary structure, in contrast to Frq2, does not interact with ric8a. In terms of tissue distribution, enriched in synapses, such as the motor nerve endings at neuromuscular junctions. In the embryo, highly expressed in the ventral ganglia.

The protein resides in the cytoplasm. Its function is as follows. Ca(2+)-dependent modulation of synaptic efficacy. Also plays a role in axon terminal morphology. This chain is Frequenin-1 (Frq1), found in Drosophila melanogaster (Fruit fly).